A 310-amino-acid chain; its full sequence is Serine/threonine-protein kinase pim-2 (310 aa).

The 261-residue stretch at 30–290 (YTMGNLLGSG…LEQILQHPWM (261 aa)) folds into the Protein kinase domain. ATP contacts are provided by residues 36 to 44 (LGSGGFGSV) and Lys-59. Asp-167 acts as the Proton acceptor in catalysis.

It belongs to the protein kinase superfamily. CAMK Ser/Thr protein kinase family. PIM subfamily. In terms of processing, autophosphorylated.

The enzyme catalyses L-seryl-[protein] + ATP = O-phospho-L-seryl-[protein] + ADP + H(+). It carries out the reaction L-threonyl-[protein] + ATP = O-phospho-L-threonyl-[protein] + ADP + H(+). Its function is as follows. Proto-oncogene with serine/threonine kinase activity involved in cell survival and cell proliferation. The polypeptide is Serine/threonine-protein kinase pim-2 (pim2) (Danio rerio (Zebrafish)).